A 285-amino-acid polypeptide reads, in one-letter code: Shikimate dehydrogenase (NADP(+)) (285 aa).

Shikimate contacts are provided by residues S22–S24 and T71. Catalysis depends on K75, which acts as the Proton acceptor. 2 residues coordinate shikimate: N96 and D111. NADP(+) is bound by residues G136–A140, N160–R165, and I225. Shikimate is bound at residue Y227. G248 provides a ligand contact to NADP(+).

This sequence belongs to the shikimate dehydrogenase family. Homodimer.

It carries out the reaction shikimate + NADP(+) = 3-dehydroshikimate + NADPH + H(+). The protein operates within metabolic intermediate biosynthesis; chorismate biosynthesis; chorismate from D-erythrose 4-phosphate and phosphoenolpyruvate: step 4/7. In terms of biological role, involved in the biosynthesis of the chorismate, which leads to the biosynthesis of aromatic amino acids. Catalyzes the reversible NADPH linked reduction of 3-dehydroshikimate (DHSA) to yield shikimate (SA). This is Shikimate dehydrogenase (NADP(+)) from Rhizobium etli (strain CIAT 652).